Consider the following 288-residue polypeptide: Syntaxin-1B (288 aa).

Positions 1-13 (MKDRTQELRSAKD) are enriched in basic and acidic residues. The tract at residues 1-20 (MKDRTQELRSAKDSDDEEEV) is disordered. Topologically, residues 1 to 264 (MKDRTQELRS…KYQSKARRKK (264 aa)) are cytoplasmic. Phosphoserine occurs at positions 10 and 14. The stretch at 29 to 104 (MDEFFEQVEE…IEQSIEQEEG (76 aa)) forms a coiled coil. Residues 191-253 (LNEIETRHNE…ERAVSDTKKA (63 aa)) enclose the t-SNARE coiled-coil homology domain. A helical; Anchor for type IV membrane protein membrane pass occupies residues 265 to 288 (IMIIICCVVLGVVLASSIGGTLGL).

The protein belongs to the syntaxin family. In terms of assembly, interacts with OTOF. Interacts with SYT6 and SYT8; the interaction is Ca(2+)-dependent. In terms of processing, phosphorylated by CK2. Post-translationally, (Microbial infection) Targeted and hydrolyzed by C.botulinum neurotoxin type C (BoNT/C); cleavage by BoNT/C inhibits neurotransmitter release. Probably hydrolyzes the 252-Lys-|-Ala-253 bond.

The protein localises to the membrane. Potentially involved in docking of synaptic vesicles at presynaptic active zones. May mediate Ca(2+)-regulation of exocytosis acrosomal reaction in sperm. This Bos taurus (Bovine) protein is Syntaxin-1B (STX1B).